A 570-amino-acid chain; its full sequence is Interleukin-1 receptor accessory protein (570 aa).

Residues Met1–Ala20 form the signal peptide. 3 consecutive Ig-like C2-type domains span residues Ser21 to Pro128, Pro141 to Thr230, and Pro243 to Lys348. Over Ser21–Thr367 the chain is Extracellular. 5 disulfides stabilise this stretch: Cys24–Cys122, Cys47–Cys114, Cys137–Cys181, Cys160–Cys212, and Cys266–Cys332. Residue Asn57 is glycosylated (N-linked (GlcNAc...) asparagine). The segment at Ile69–Phe85 is essential for interaction with PTPRD. 6 N-linked (GlcNAc...) asparagine glycosylation sites follow: Asn107, Asn111, Asn118, Asn157, Asn196, and Asn209. A helical transmembrane segment spans residues Val368–Phe388. Over Tyr389–Val570 the chain is Cytoplasmic. The TIR domain maps to Lys403–Met546. Glu482 is an active-site residue. Residues Lys550–Val570 are disordered. Positions Arg553–Val570 are enriched in polar residues. A Phosphoserine modification is found at Ser557.

The protein belongs to the interleukin-1 receptor family. The interleukin-36 receptor complex is a heterodimer of IL1RL2 and IL1RAP; the association is inhibited by IL36RN. The interleukin-1 receptor complex is a heterodimer of IL1R1 and IL1RAP. Associates with IL1R2 to form a non-signaling interleukin-1 receptor complex. Interacts with IL-33-bound IL1RL1 to form the minimal interleukin-33 signaling complex with a 1:1:1 stoichiometry. Interacts with KIT (independently of stimulation with KITLG/SCF). A mast cell-specific KITLG/SCF-induced interleukin-33 signaling complex contains IL1RL1, IL1RAP, KIT and MYD88. Interacts (via the first immunoglobilin domain) with PTPRD (via the third immunoglobilin domain); induces pre- and postsynaptic differentiation of neurons. In terms of tissue distribution, highly expressed in hypothalamus, in the dentate gyrus of hippocampus, cerebral cortex, cerebellum, liver and lung.

The protein resides in the membrane. It carries out the reaction NAD(+) + H2O = ADP-D-ribose + nicotinamide + H(+). Functionally, coreceptor for IL1RL2 in the IL-36 signaling system. Coreceptor with IL1R1 in the IL-1 signaling system. Associates with IL1R1 bound to IL1B to form the high affinity interleukin-1 receptor complex which mediates interleukin-1-dependent activation of NF-kappa-B and other pathways. Signaling involves the recruitment of adapter molecules such as TOLLIP, MYD88, and IRAK1 or IRAK2 via the respective TIR domains of the receptor/coreceptor subunits. Recruits TOLLIP to the signaling complex. Does not bind to interleukin-1 alone; binding of IL1RN to IL1R1, prevents its association with IL1R1 to form a signaling complex. The cellular response is modulated through a non-signaling association with the membrane IL1R2 decoy receptor. Coreceptor for IL1RL1 in the IL-33 signaling system. Can bidirectionally induce pre- and postsynaptic differentiation of neurons by trans-synaptically binding to PTPRD. May play a role in IL1B-mediated costimulation of IFNG production from T-helper 1 (Th1) cells. In Rattus norvegicus (Rat), this protein is Interleukin-1 receptor accessory protein (Il1rap).